The primary structure comprises 66 residues: Moricin-2 (66 aa).

A signal peptide spans 1–24 (MNILKLFFVFIVAMSLVSCSTAAP).

In terms of tissue distribution, expressed in fat body and to a lesser extent in hemocyte and Malpighian tubules.

Its subcellular location is the secreted. Its function is as follows. Has antibacterial activity against Gram-positive and Gram-negative bacteria. Probably acts by disturbing membrane functions with its amphipathic structure. This chain is Moricin-2 (MOR2), found in Bombyx mori (Silk moth).